We begin with the raw amino-acid sequence, 203 residues long: Ras-like protein family member 10A (203 aa).

The tract at residues 1–203 is small GTPase-like; that stretch reads MGGSLRVAVL…ALHPARCSLM (203 aa). 11-18 serves as a coordination point for GTP; it reads GAPGVGKT. An Effector region motif is present at residues 33–42; the sequence is HRPTDSPCLY. Residues 59–62 and 129–132 contribute to the GTP site; these read DGDV and NKRD. Residue cysteine 200 is modified to Cysteine methyl ester. A lipid anchor (S-farnesyl cysteine) is attached at cysteine 200. Positions 201-203 are cleaved as a propeptide — removed in mature form; that stretch reads SLM.

The protein belongs to the small GTPase superfamily. Ras family. In terms of processing, isoprenylation is essential for nucleolar localization, and the proliferation-inhibiting activity of RASL10A.

It localises to the cell membrane. The protein localises to the nucleus. Its subcellular location is the nucleolus. The enzyme catalyses GTP + H2O = GDP + phosphate + H(+). Its function is as follows. Potent inhibitor of cellular proliferation. This is Ras-like protein family member 10A (Rasl10a) from Mus musculus (Mouse).